We begin with the raw amino-acid sequence, 254 residues long: Protein GVQW3 (254 aa).

The protein is Protein GVQW3 of Homo sapiens (Human).